Reading from the N-terminus, the 459-residue chain is Elongation factor 1-alpha 1 (459 aa).

The tr-type G domain maps to 5–242 (KTHINIVVIG…DCIIPPQRPT (238 aa)). A G1 region spans residues 14–21 (GHVDSGKS). Residues 70-74 (GITID) form a G2 region. The G3 stretch occupies residues 91 to 94 (DAPG). The tract at residues 153 to 156 (NKMD) is G4. Residues 194-196 (SGF) are G5. 2 positions are modified to 5-glutamyl glycerylphosphorylethanolamine: E301 and E374.

It belongs to the TRAFAC class translation factor GTPase superfamily. Classic translation factor GTPase family. EF-Tu/EF-1A subfamily.

It is found in the cytoplasm. In terms of biological role, this protein promotes the GTP-dependent binding of aminoacyl-tRNA to the A-site of ribosomes during protein biosynthesis. This chain is Elongation factor 1-alpha 1 (eft-1), found in Oscheius tipulae.